The sequence spans 103 residues: Large ribosomal subunit protein eL14 (103 aa).

It belongs to the eukaryotic ribosomal protein eL14 family.

In Pyrobaculum aerophilum (strain ATCC 51768 / DSM 7523 / JCM 9630 / CIP 104966 / NBRC 100827 / IM2), this protein is Large ribosomal subunit protein eL14.